Reading from the N-terminus, the 546-residue chain is Chaperonin GroEL (546 aa).

ATP-binding positions include 30–33, lysine 51, 87–91, glycine 415, 479–481, and aspartate 495; these read TLGP, DGTTT, and NAA.

This sequence belongs to the chaperonin (HSP60) family. Forms a cylinder of 14 subunits composed of two heptameric rings stacked back-to-back. Interacts with the co-chaperonin GroES.

Its subcellular location is the cytoplasm. It catalyses the reaction ATP + H2O + a folded polypeptide = ADP + phosphate + an unfolded polypeptide.. In terms of biological role, together with its co-chaperonin GroES, plays an essential role in assisting protein folding. The GroEL-GroES system forms a nano-cage that allows encapsulation of the non-native substrate proteins and provides a physical environment optimized to promote and accelerate protein folding. This chain is Chaperonin GroEL, found in Bordetella avium (strain 197N).